Consider the following 89-residue polypeptide: Small ribosomal subunit protein uS17 (89 aa).

The protein belongs to the universal ribosomal protein uS17 family. Part of the 30S ribosomal subunit.

Functionally, one of the primary rRNA binding proteins, it binds specifically to the 5'-end of 16S ribosomal RNA. This chain is Small ribosomal subunit protein uS17, found in Delftia acidovorans (strain DSM 14801 / SPH-1).